The chain runs to 445 residues: tRNA modification GTPase MnmE (445 aa).

3 residues coordinate (6S)-5-formyl-5,6,7,8-tetrahydrofolate: Arg20, Glu79, and Lys119. Residues 215-371 (GLKLAIIGPP…ILKNIENIAE (157 aa)) form the TrmE-type G domain. Asn225 contributes to the K(+) binding site. GTP-binding positions include 225 to 230 (NAGKSS), 244 to 250 (SNIAGTT), and 269 to 272 (DTAG). Ser229 contacts Mg(2+). Residues Ser244, Ile246, and Thr249 each coordinate K(+). Thr250 is a Mg(2+) binding site. Lys445 is a binding site for (6S)-5-formyl-5,6,7,8-tetrahydrofolate.

The protein belongs to the TRAFAC class TrmE-Era-EngA-EngB-Septin-like GTPase superfamily. TrmE GTPase family. As to quaternary structure, homodimer. Heterotetramer of two MnmE and two MnmG subunits. It depends on K(+) as a cofactor.

It is found in the cytoplasm. In terms of biological role, exhibits a very high intrinsic GTPase hydrolysis rate. Involved in the addition of a carboxymethylaminomethyl (cmnm) group at the wobble position (U34) of certain tRNAs, forming tRNA-cmnm(5)s(2)U34. This chain is tRNA modification GTPase MnmE, found in Rickettsia canadensis (strain McKiel).